Reading from the N-terminus, the 20-residue chain is Insulin-like growth factor-binding protein 2 (20 aa).

The IGFBP N-terminal domain maps to 2–20; it reads LVFYCPKCTAERQTACPKL.

In terms of assembly, binds IGF2 more than IGF1. Post-translationally, N-glycosylated.

The protein resides in the secreted. Functionally, inhibits IGF-mediated growth and developmental rates. IGF-binding proteins prolong the half-life of the IGFs and have been shown to either inhibit or stimulate the growth promoting effects of the IGFs on cell culture. They alter the interaction of IGFs with their cell surface receptors. The protein is Insulin-like growth factor-binding protein 2 (igfbp2) of Oncorhynchus tshawytscha (Chinook salmon).